A 502-amino-acid chain; its full sequence is MSLVLLSLAALCRSAVPREPTVQCGSETGPSPEWMLQHDLIPGDLRDLRVEPVTTSVATGDYSILMNVSWVLRADASIRLLKATKICVTGKSNFQSYSCVRCNYTEAFQTQTRPSGGKWTFSYIGFPVELNTVYFIGAHNIPNANMNEDGPSMSVNFTSPGCLDHIMKYKKKCVKAGSLWDPNITACKKNEETVEVNFTTTPLGNRYMALIQHSTIIGFSQVFEPHQKKQTRASVVIPVTGDSEGATVQLTPYFPTCGSDCIRHKGTVVLCPQTGVPFPLDNNKSKPGGWLPLLLLSLLVATWVLVAGIYLMWRHERIKKTSFSTTTLLPPIKVLVVYPSEICFHHTICYFTEFLQNHCRSEVILEKWQKKKIAEMGPVQWLATQKKAADKVVFLLSNDVNSVCDGTCGKSEGSPSENSQDLFPLAFNLFCSDLRSQIHLHKYVVVYFREIDTKDDYNALSVCPKYHLMKDATAFCAELLHVKQQVSAGKRSQACHDGCCSL.

Positions 1–17 are cleaved as a signal peptide; sequence MSLVLLSLAALCRSAVP. Topologically, residues 18 to 292 are extracellular; sequence REPTVQCGSE…NKSKPGGWLP (275 aa). N-linked (GlcNAc...) asparagine glycans are attached at residues N67, N103, N156, N183, N197, and N283. The chain crosses the membrane as a helical span at residues 293–313; the sequence is LLLLSLLVATWVLVAGIYLMW. Residues 314–502 are Cytoplasmic-facing; that stretch reads RHERIKKTSF…QACHDGCCSL (189 aa). Positions 331–477 constitute an SEFIR domain; sequence PIKVLVVYPS…LMKDATAFCA (147 aa).

Interacts with DAZAP2. Interacts with TRAF3IP2. In terms of tissue distribution, expressed in several endocrine tissues, mostly in fetal and adult liver, kidney, pancreas, testis, colon, brain and small intestine; not detected in peripheral blood leukocytes, lymphoid organs, and most cell lines.

Its subcellular location is the cell membrane. The protein resides in the secreted. Functionally, receptor for the pro-inflammatory cytokines IL17B and IL17E. May play a role in controlling the growth and/or differentiation of hematopoietic cells. The chain is Interleukin-17 receptor B (IL17RB) from Homo sapiens (Human).